The following is a 196-amino-acid chain: Thymidine kinase (196 aa).

17–24 (GPMFAGKT) contributes to the ATP binding site. Residue Glu92 is the Proton acceptor of the active site. Residue Phe121 coordinates substrate. Zn(2+)-binding residues include Cys146 and Cys149. 166-170 (LILAG) is a binding site for substrate. Zn(2+) is bound by residues Cys179 and Cys182.

The protein belongs to the thymidine kinase family.

It carries out the reaction thymidine + ATP = dTMP + ADP + H(+). Phosphorylates thymidine. ASFV replicates in the cytoplasm of infected cells and contains genes encoding a number of enzymes needed for DNA synthesis, including thymidine kinase. Important for growth in swine macrophages in vitro and is a virus virulence factor in swine. In Ornithodoros (relapsing fever ticks), this protein is Thymidine kinase.